The following is a 295-amino-acid chain: 4-hydroxy-tetrahydrodipicolinate synthase (295 aa).

Thr-45 lines the pyruvate pocket. Catalysis depends on Tyr-131, which acts as the Proton donor/acceptor. The active-site Schiff-base intermediate with substrate is the Lys-159. Val-202 lines the pyruvate pocket.

The protein belongs to the DapA family. Homotetramer; dimer of dimers.

The protein resides in the cytoplasm. The catalysed reaction is L-aspartate 4-semialdehyde + pyruvate = (2S,4S)-4-hydroxy-2,3,4,5-tetrahydrodipicolinate + H2O + H(+). The protein operates within amino-acid biosynthesis; L-lysine biosynthesis via DAP pathway; (S)-tetrahydrodipicolinate from L-aspartate: step 3/4. In terms of biological role, catalyzes the condensation of (S)-aspartate-beta-semialdehyde [(S)-ASA] and pyruvate to 4-hydroxy-tetrahydrodipicolinate (HTPA). The sequence is that of 4-hydroxy-tetrahydrodipicolinate synthase from Methanothrix thermoacetophila (strain DSM 6194 / JCM 14653 / NBRC 101360 / PT) (Methanosaeta thermophila).